We begin with the raw amino-acid sequence, 193 residues long: Putative manganese efflux pump MntP (193 aa).

6 helical membrane-spanning segments follow: residues 6 to 26, 39 to 59, 61 to 81, 106 to 126, 132 to 152, and 165 to 185; these read VVFV…GIAC, VAGT…YAGL, IADV…TVIG, LGLL…GLTF, NIGL…YLGF, and WVGI…LAEH.

The protein belongs to the MntP (TC 9.B.29) family.

It is found in the cell membrane. Functionally, probably functions as a manganese efflux pump. The polypeptide is Putative manganese efflux pump MntP (Dehalococcoides mccartyi (strain ATCC BAA-2266 / KCTC 15142 / 195) (Dehalococcoides ethenogenes (strain 195))).